A 376-amino-acid polypeptide reads, in one-letter code: ATP phosphoribosyltransferase regulatory subunit (376 aa).

The protein belongs to the class-II aminoacyl-tRNA synthetase family. HisZ subfamily. In terms of assembly, heteromultimer composed of HisG and HisZ subunits.

The protein resides in the cytoplasm. It functions in the pathway amino-acid biosynthesis; L-histidine biosynthesis; L-histidine from 5-phospho-alpha-D-ribose 1-diphosphate: step 1/9. Required for the first step of histidine biosynthesis. May allow the feedback regulation of ATP phosphoribosyltransferase activity by histidine. The protein is ATP phosphoribosyltransferase regulatory subunit of Brucella anthropi (strain ATCC 49188 / DSM 6882 / CCUG 24695 / JCM 21032 / LMG 3331 / NBRC 15819 / NCTC 12168 / Alc 37) (Ochrobactrum anthropi).